The sequence spans 372 residues: Heat-inducible transcription repressor HrcA (372 aa).

The disordered stretch occupies residues 296-331 (VSSGYGRSGEAGEPAGNDPVGEPETESETESQTNDM).

Belongs to the HrcA family.

Its function is as follows. Negative regulator of class I heat shock genes (grpE-dnaK-dnaJ and groELS operons). Prevents heat-shock induction of these operons. The polypeptide is Heat-inducible transcription repressor HrcA (Bifidobacterium longum subsp. infantis (strain ATCC 15697 / DSM 20088 / JCM 1222 / NCTC 11817 / S12)).